A 101-amino-acid polypeptide reads, in one-letter code: Protein Tat (101 aa).

Residues 1–24 (MEPVDPNLEPWNHPGSQPKTACNN) form an interaction with human CREBBP region. Positions 1–48 (MEPVDPNLEPWNHPGSQPKTACNNCYCKRCSYHCLVCFQTKGLGISYG) are transactivation. Residues cysteine 22, cysteine 25, and cysteine 27 each contribute to the Zn(2+) site. The cysteine-rich stretch occupies residues 22 to 37 (CNNCYCKRCSYHCLVC). At lysine 28 the chain carries N6-acetyllysine; by host PCAF. 4 residues coordinate Zn(2+): cysteine 30, histidine 33, cysteine 34, and cysteine 37. Positions 38-48 (FQTKGLGISYG) are core. A disordered region spans residues 47–101 (YGRKKRRQRRSAPPSSEDHQNPIPKQPLPQTRGDQTGSEESKKKVESKTETDPFD). A Nuclear localization signal, RNA-binding (TAR), and protein transduction motif is present at residues 49-57 (RKKRRQRRS). The interval 49 to 86 (RKKRRQRRSAPPSSEDHQNPIPKQPLPQTRGDQTGSEE) is interaction with the host capping enzyme RNGTT. An N6-acetyllysine; by host EP300 and GCN5L2 mark is found at lysine 50 and lysine 51. An asymmetric dimethylarginine; by host PRMT6 mark is found at arginine 52 and arginine 53. Lysine 71 is covalently cross-linked (Glycyl lysine isopeptide (Lys-Gly) (interchain with G-Cter in ubiquitin)). The Cell attachment site signature appears at 78–80 (RGD). The span at 85–101 (EESKKKVESKTETDPFD) shows a compositional bias: basic and acidic residues.

This sequence belongs to the lentiviruses Tat family. Interacts with host CCNT1. Associates with the P-TEFb complex composed at least of Tat, P-TEFb (CDK9 and CCNT1), TAR RNA, RNA Pol II. Recruits the HATs CREBBP, TAF1/TFIID, EP300, PCAF and GCN5L2. Interacts with host KAT5/Tip60; this interaction targets the latter to degradation. Interacts with the host deacetylase SIRT1. Interacts with host capping enzyme RNGTT; this interaction stimulates RNGTT. Binds to host KDR, and to the host integrins ITGAV/ITGB3 and ITGA5/ITGB1. Interacts with host KPNB1/importin beta-1 without previous binding to KPNA1/importin alpha-1. Interacts with EIF2AK2. Interacts with host nucleosome assembly protein NAP1L1; this interaction may be required for the transport of Tat within the nucleus, since the two proteins interact at the nuclear rim. Interacts with host C1QBP/SF2P32; this interaction involves lysine-acetylated Tat. Interacts with the host chemokine receptors CCR2, CCR3 and CXCR4. Interacts with host DPP4/CD26; this interaction may trigger an anti-proliferative effect. Interacts with host LDLR. Interacts with the host extracellular matrix metalloproteinase MMP1. Interacts with host PRMT6; this interaction mediates Tat's methylation. Interacts with, and is ubiquitinated by MDM2/Hdm2. Interacts with host PSMC3 and HTATIP2. Interacts with STAB1; this interaction may overcome SATB1-mediated repression of IL2 and IL2RA (interleukin) in T cells by binding to the same domain than HDAC1. Interacts (when acetylated) with human CDK13, thereby increasing HIV-1 mRNA splicing and promoting the production of the doubly spliced HIV-1 protein Nef. Interacts with host TBP; this interaction modulates the activity of transcriptional pre-initiation complex. Interacts with host RELA. Interacts with host PLSCR1; this interaction negatively regulates Tat transactivation activity by altering its subcellular distribution. Post-translationally, asymmetrical arginine methylation by host PRMT6 seems to diminish the transactivation capacity of Tat and affects the interaction with host CCNT1. Acetylation by EP300, CREBBP, GCN5L2/GCN5 and PCAF regulates the transactivation activity of Tat. EP300-mediated acetylation of Lys-50 promotes dissociation of Tat from the TAR RNA through the competitive binding to PCAF's bromodomain. In addition, the non-acetylated Tat's N-terminus can also interact with PCAF. PCAF-mediated acetylation of Lys-28 enhances Tat's binding to CCNT1. Lys-50 is deacetylated by SIRT1. In terms of processing, polyubiquitination by host MDM2 does not target Tat to degradation, but activates its transactivation function and fosters interaction with CCNT1 and TAR RNA. Post-translationally, phosphorylated by EIF2AK2 on serine and threonine residues adjacent to the basic region important for TAR RNA binding and function. Phosphorylation of Tat by EIF2AK2 is dependent on the prior activation of EIF2AK2 by dsRNA.

The protein resides in the host nucleus. The protein localises to the host nucleolus. Its subcellular location is the host cytoplasm. It is found in the secreted. Transcriptional activator that increases RNA Pol II processivity, thereby increasing the level of full-length viral transcripts. Recognizes a hairpin structure at the 5'-LTR of the nascent viral mRNAs referred to as the transactivation responsive RNA element (TAR) and recruits the cyclin T1-CDK9 complex (P-TEFb complex) that will in turn hyperphosphorylate the RNA polymerase II to allow efficient elongation. The CDK9 component of P-TEFb and other Tat-activated kinases hyperphosphorylate the C-terminus of RNA Pol II that becomes stabilized and much more processive. Other factors such as HTATSF1/Tat-SF1, SUPT5H/SPT5, and HTATIP2 are also important for Tat's function. Besides its effect on RNA Pol II processivity, Tat induces chromatin remodeling of proviral genes by recruiting the histone acetyltransferases (HATs) CREBBP, EP300 and PCAF to the chromatin. This also contributes to the increase in proviral transcription rate, especially when the provirus integrates in transcriptionally silent region of the host genome. To ensure maximal activation of the LTR, Tat mediates nuclear translocation of NF-kappa-B by interacting with host RELA. Through its interaction with host TBP, Tat may also modulate transcription initiation. Tat can reactivate a latently infected cell by penetrating in it and transactivating its LTR promoter. In the cytoplasm, Tat is thought to act as a translational activator of HIV-1 mRNAs. Its function is as follows. Extracellular circulating Tat can be endocytosed by surrounding uninfected cells via the binding to several surface receptors such as CD26, CXCR4, heparan sulfate proteoglycans (HSPG) or LDLR. Neurons are rarely infected, but they internalize Tat via their LDLR. Through its interaction with nuclear HATs, Tat is potentially able to control the acetylation-dependent cellular gene expression. Modulates the expression of many cellular genes involved in cell survival, proliferation or in coding for cytokines or cytokine receptors. Tat plays a role in T-cell and neurons apoptosis. Tat induced neurotoxicity and apoptosis probably contribute to neuroAIDS. Circulating Tat also acts as a chemokine-like and/or growth factor-like molecule that binds to specific receptors on the surface of the cells, affecting many cellular pathways. In the vascular system, Tat binds to ITGAV/ITGB3 and ITGA5/ITGB1 integrins dimers at the surface of endothelial cells and competes with bFGF for heparin-binding sites, leading to an excess of soluble bFGF. This chain is Protein Tat, found in Human immunodeficiency virus type 1 group M subtype C (isolate 92BR025) (HIV-1).